Consider the following 355-residue polypeptide: 3-dehydroquinate synthase (355 aa).

Residues 105 to 109 (GVVGD), 129 to 130 (TS), lysine 142, lysine 151, and 169 to 172 (TLKT) each bind NAD(+). Zn(2+) contacts are provided by glutamate 184, histidine 246, and histidine 263.

The protein belongs to the sugar phosphate cyclases superfamily. Dehydroquinate synthase family. NAD(+) is required as a cofactor. Co(2+) serves as cofactor. The cofactor is Zn(2+).

It localises to the cytoplasm. It carries out the reaction 7-phospho-2-dehydro-3-deoxy-D-arabino-heptonate = 3-dehydroquinate + phosphate. It functions in the pathway metabolic intermediate biosynthesis; chorismate biosynthesis; chorismate from D-erythrose 4-phosphate and phosphoenolpyruvate: step 2/7. Catalyzes the conversion of 3-deoxy-D-arabino-heptulosonate 7-phosphate (DAHP) to dehydroquinate (DHQ). The protein is 3-dehydroquinate synthase of Streptococcus agalactiae serotype V (strain ATCC BAA-611 / 2603 V/R).